Here is a 217-residue protein sequence, read N- to C-terminus: UPF0502 protein swp_3027 (217 aa).

This sequence belongs to the UPF0502 family.

This is UPF0502 protein swp_3027 from Shewanella piezotolerans (strain WP3 / JCM 13877).